The following is a 365-amino-acid chain: L-lactate oxidase (365 aa).

An FMN hydroxy acid dehydrogenase domain is found at 6-365 (RIPPGVWNAI…ITHDTLTPSC (360 aa)). Residue Tyr-32 participates in pyruvate binding. FMN-binding positions include 85–87 (PVA), Ser-114, and Gln-135. Residue Tyr-137 participates in pyruvate binding. FMN contacts are provided by Thr-163, Lys-237, and Ser-259. Positions 261 and 264 each coordinate pyruvate. The active-site Proton acceptor is His-261. Residues 292–296 (DGGVR) and Arg-316 contribute to the FMN site.

The protein belongs to the FMN-dependent alpha-hydroxy acid dehydrogenase family. Homotetramer. FMN serves as cofactor.

The enzyme catalyses (S)-lactate + O2 = pyruvate + H2O2. The catalysed reaction is glycolate + O2 = glyoxylate + H2O2. Its function is as follows. Catalyzes the oxidation of (S)-lactate (L-lactate) to pyruvate, with a reduction of O2 to H2O2. To a lesser extent is also able to use glycolate as substrate. This Alicycliphilus denitrificans (strain DSM 14773 / CIP 107495 / K601) protein is L-lactate oxidase.